The following is a 562-amino-acid chain: Tissue-type plasminogen activator (562 aa).

Residues Met-1–Pro-22 form the signal peptide. Residues Ser-23–Arg-32 constitute a propeptide that is removed on maturation. Residues Gly-33–Arg-35 constitute a propeptide, removed by plasmin. Residues Val-39–Val-81 form the Fibronectin type-I domain. 17 disulfides stabilise this stretch: Cys-41-Cys-71, Cys-69-Cys-78, Cys-86-Cys-97, Cys-91-Cys-108, Cys-110-Cys-119, Cys-127-Cys-208, Cys-148-Cys-190, Cys-179-Cys-203, Cys-215-Cys-296, Cys-236-Cys-278, Cys-267-Cys-291, Cys-299-Cys-430, Cys-342-Cys-358, Cys-350-Cys-419, Cys-444-Cys-519, Cys-476-Cys-492, and Cys-509-Cys-537. Positions Arg-42–Gln-52 are important for binding to annexin A2. In terms of domain architecture, EGF-like spans Pro-82–Glu-120. Thr-96 is a glycosylation site (O-linked (Fuc) threonine). 2 Kringle domains span residues Cys-127–Cys-208 and Cys-215–Cys-296. The N-linked (GlcNAc...) asparagine glycan is linked to Asn-152. N-linked (GlcNAc...) asparagine; partial glycosylation occurs at Asn-219. The Peptidase S1 domain maps to Ile-311–Arg-561. Catalysis depends on charge relay system residues His-357 and Asp-406. An N-linked (GlcNAc...) asparagine glycan is attached at Asn-483. The Charge relay system role is filled by Ser-513.

Belongs to the peptidase S1 family. As to quaternary structure, heterodimer of chain A and chain B held by a disulfide bond. Forms a heterodimer with SERPINA5. Binds to fibrin with high affinity. This interaction leads to an increase in the catalytic efficiency of the enzyme between 100-fold and 1000-fold, due to an increase in affinity for plasminogen. Similarly, binding to heparin increases the activation of plasminogen. Binds to annexin A2, cytokeratin-8, fibronectin and laminin. Binds to mannose receptor and the low-density lipoprotein receptor-related protein (LRP1); these proteins are involved in TPA clearance. Yet unidentified interactions on endothelial cells and vascular smooth muscle cells (VSMC) lead to a 100-fold stimulation of plasminogen activation. In addition, binding to VSMC reduces TPA inhibition by PAI-1 by 30-fold. Binds LRP1B; binding is followed by internalization and degradation. Interacts with SERPINE1. In complex with SERPINE1, interacts with SORL1. Interacts with apyrase from Anopheles gambiae saliva; the interaction results in PLAT activation probably via an allosteric activation mechanism. The single chain, almost fully active enzyme, can be further processed into a two-chain fully active form by a cleavage after Arg-310 catalyzed by plasmin, tissue kallikrein or factor Xa. In terms of processing, differential cell-specific N-linked glycosylation gives rise to two glycoforms, type I (glycosylated at Asn-219) and type II (not glycosylated at Asn-219). The single chain type I glycoform is less readily converted into the two-chain form by plasmin, and the two-chain type I glycoform has a lower activity than the two-chain type II glycoform in the presence of fibrin. Post-translationally, N-glycosylation of Asn-152; the bound oligomannosidic glycan is involved in the interaction with the mannose receptor. Characterization of O-linked glycan was studied in Bowes melanoma cell line. Synthesized in numerous tissues (including tumors) and secreted into most extracellular body fluids, such as plasma, uterine fluid, saliva, gingival crevicular fluid, tears, seminal fluid, and milk.

It localises to the secreted. It is found in the extracellular space. It carries out the reaction Specific cleavage of Arg-|-Val bond in plasminogen to form plasmin.. Its activity is regulated as follows. Inhibited by SERPINA5. Inhibited by SERPINE1. Converts the abundant, but inactive, zymogen plasminogen to plasmin by hydrolyzing a single Arg-Val bond in plasminogen. By controlling plasmin-mediated proteolysis, it plays an important role in tissue remodeling and degradation, in cell migration and many other physiopathological events. During oocyte activation, plays a role in cortical granule reaction in the zona reaction, which contributes to the block to polyspermy. This is Tissue-type plasminogen activator from Homo sapiens (Human).